Here is a 357-residue protein sequence, read N- to C-terminus: Glucose-6-phosphatase catalytic subunit 1 (357 aa).

Over 1 to 28 (MEKGMNVLHDFGIQSTHYLQVNYQDSQD) the chain is Lumenal. The helical transmembrane segment at 29-49 (WFILVSVIADLRNAFYVLFPI) threads the bilayer. At 50-60 (WFHLREAVGIK) the chain is on the cytoplasmic side. Residues 61-81 (LLWVAVIGDWLNLVFKWILFG) traverse the membrane as a helical segment. Topologically, residues 82 to 117 (QRPYWWVMDTDYYSNASVPLIKQFPVTCETGPGSPS) are lumenal. R83 lines the substrate pocket. N-linked (GlcNAc...) asparagine glycosylation occurs at N96. Residues 118–138 (GHAMGTAGVYYVMVTSTLSMF) form a helical membrane-spanning segment. Residue H119 is the Proton donor of the active site. Residues 139–147 (RGKKKPTYR) are Cytoplasmic-facing. The chain crosses the membrane as a helical span at residues 148-168 (FRCLNVILWLGFWAVQLNVCL). At 169–170 (SR) the chain is on the lumenal side. R170 contributes to the substrate binding site. Residues 171 to 191 (IYLAAHFPHQVVAGVLSGIAV) form a helical membrane-spanning segment. The active-site Nucleophile is the H176. Over 192–209 (AETFRHIQSIYNASLKKY) the chain is Cytoplasmic. The helical transmembrane segment at 210 to 230 (FFITFFLLSFAIGFYLLLKGL) threads the bilayer. At 231–254 (GVDLLWTLEKARRWCERPEWVHID) the chain is on the lumenal side. A helical membrane pass occupies residues 255 to 275 (TTPFASLLKNVGTLFGLGLAL). Residues 276–291 (NSSMYRESCKGTLSKW) are Cytoplasmic-facing. Residues 292–312 (FPFRLSCIVVSLILLHLFDSL) form a helical membrane-spanning segment. Over 313 to 320 (KPPSQIEL) the chain is Lumenal. The chain crosses the membrane as a helical span at residues 321–341 (IFYVLSFCKSAAVPLASVSLI). The Cytoplasmic portion of the chain corresponds to 342–357 (PYCLARVLGQPDKKSL). Residues 354 to 357 (KKSL) carry the Prevents secretion from ER motif.

It belongs to the glucose-6-phosphatase family.

It localises to the endoplasmic reticulum membrane. It carries out the reaction D-glucose 6-phosphate + H2O = D-glucose + phosphate. The protein operates within carbohydrate biosynthesis; gluconeogenesis. Functionally, hydrolyzes glucose-6-phosphate to glucose in the endoplasmic reticulum. Forms with the glucose-6-phosphate transporter (SLC37A4/G6PT) the complex responsible for glucose production in the terminal step of glycogenolysis and gluconeogenesis. Hence, it is the key enzyme in homeostatic regulation of blood glucose levels. This Felis catus (Cat) protein is Glucose-6-phosphatase catalytic subunit 1 (G6PC1).